We begin with the raw amino-acid sequence, 334 residues long: GTP 3',8-cyclase (334 aa).

The Radical SAM core domain maps to lysine 13–alanine 239. A GTP-binding site is contributed by arginine 22. Positions 29 and 33 each coordinate [4Fe-4S] cluster. Tyrosine 35 is a binding site for S-adenosyl-L-methionine. Cysteine 36 serves as a coordination point for [4Fe-4S] cluster. Arginine 73 contacts GTP. Glycine 77 is an S-adenosyl-L-methionine binding site. Position 104 (threonine 104) interacts with GTP. Serine 128 provides a ligand contact to S-adenosyl-L-methionine. Lysine 165 contacts GTP. S-adenosyl-L-methionine is bound at residue methionine 199. Positions 262 and 265 each coordinate [4Fe-4S] cluster. Arginine 267–arginine 269 is a binding site for GTP. Cysteine 279 is a binding site for [4Fe-4S] cluster.

It belongs to the radical SAM superfamily. MoaA family. As to quaternary structure, monomer and homodimer. [4Fe-4S] cluster is required as a cofactor.

It carries out the reaction GTP + AH2 + S-adenosyl-L-methionine = (8S)-3',8-cyclo-7,8-dihydroguanosine 5'-triphosphate + 5'-deoxyadenosine + L-methionine + A + H(+). Its pathway is cofactor biosynthesis; molybdopterin biosynthesis. Functionally, catalyzes the cyclization of GTP to (8S)-3',8-cyclo-7,8-dihydroguanosine 5'-triphosphate. The sequence is that of GTP 3',8-cyclase from Vibrio parahaemolyticus serotype O3:K6 (strain RIMD 2210633).